The primary structure comprises 57 residues: MTILKWALIFFVVSVIVGVLGFTGISAASADVARILFYIFLVIFLVLLILGLTIFRA.

The next 2 helical transmembrane spans lie at 6–26 (WALI…TGIS) and 35–55 (ILFY…LTIF).

Belongs to the UPF0391 family.

Its subcellular location is the cell membrane. This Rhodopseudomonas palustris (strain BisB18) protein is UPF0391 membrane protein RPC_2356.